Here is a 98-residue protein sequence, read N- to C-terminus: Aspartyl/glutamyl-tRNA(Asn/Gln) amidotransferase subunit C (98 aa).

The interval 77–98 (NEAPNPEGDFFRVPQILNTDEE) is disordered.

It belongs to the GatC family. Heterotrimer of A, B and C subunits.

The enzyme catalyses L-glutamyl-tRNA(Gln) + L-glutamine + ATP + H2O = L-glutaminyl-tRNA(Gln) + L-glutamate + ADP + phosphate + H(+). It catalyses the reaction L-aspartyl-tRNA(Asn) + L-glutamine + ATP + H2O = L-asparaginyl-tRNA(Asn) + L-glutamate + ADP + phosphate + 2 H(+). Functionally, allows the formation of correctly charged Asn-tRNA(Asn) or Gln-tRNA(Gln) through the transamidation of misacylated Asp-tRNA(Asn) or Glu-tRNA(Gln) in organisms which lack either or both of asparaginyl-tRNA or glutaminyl-tRNA synthetases. The reaction takes place in the presence of glutamine and ATP through an activated phospho-Asp-tRNA(Asn) or phospho-Glu-tRNA(Gln). This is Aspartyl/glutamyl-tRNA(Asn/Gln) amidotransferase subunit C from Crocosphaera subtropica (strain ATCC 51142 / BH68) (Cyanothece sp. (strain ATCC 51142)).